The chain runs to 161 residues: MNSFRGRYTNKIDSKGRVSVPAKFRAVSIAQGLNGIICFPPLSEGKFIEGCGPAFSEEIDRMLDRLDPFSEERDMLASVLLGESAELMFDADGRVNLPDNLRELAGLTDEVVFVGAGPRFQIWEPGAYAAFAVEAQKRVPGFRELLKSTQASLRPEGGGGR.

SpoVT-AbrB domains lie at 7-55 (RYTN…GPAF) and 84-127 (SAEL…EPGA).

This sequence belongs to the MraZ family. In terms of assembly, forms oligomers.

Its subcellular location is the cytoplasm. The protein localises to the nucleoid. This is Transcriptional regulator MraZ from Parvibaculum lavamentivorans (strain DS-1 / DSM 13023 / NCIMB 13966).